Here is a 351-residue protein sequence, read N- to C-terminus: D-glucoside 3-dehydrogenase (351 aa).

It belongs to the Gfo/Idh/MocA family.

The catalysed reaction is a D-glucoside + NAD(+) = a 3-dehydro-D-glucoside + NADH + H(+). Catalyzes the NADH-dependent reduction of the oxo group at C3 of 3-dehydro-D-glucosides leading to D-glucosides. Probably functions in a metabolic pathway that transforms D-gulosides to D-glucosides. Can use 3-dehydro-D-glucose, methyl alpha-3-dehydro-D-glucoside and methyl beta-3-dehydro-D-glucoside as substrates in vitro. However, the actual specific physiological substrates for this metabolic pathway are unknown. To a lesser extent, is also able to catalyze the reverse reactions, i.e. the NAD(+)-dependent oxidation of the hydroxyl group at C3 of D-glucosides leading to 3-dehydro-D-glucosides. Cannot act on UDP-glucose, UDP-N-acetyl-D-glucosamine, D-glucosamine, N-acetyl-D-glucosamine, or UDP-D-galactose. This Escherichia coli (strain K12) protein is D-glucoside 3-dehydrogenase (ycjS).